A 124-amino-acid polypeptide reads, in one-letter code: Aspartate 1-decarboxylase (124 aa).

Residue Ser-25 is the Schiff-base intermediate with substrate; via pyruvic acid of the active site. Ser-25 carries the pyruvic acid (Ser) modification. Thr-57 serves as a coordination point for substrate. The active-site Proton donor is Tyr-58. Position 73-75 (73-75 (GAA)) interacts with substrate.

The protein belongs to the PanD family. Heterooctamer of four alpha and four beta subunits. The cofactor is pyruvate. Is synthesized initially as an inactive proenzyme, which is activated by self-cleavage at a specific serine bond to produce a beta-subunit with a hydroxyl group at its C-terminus and an alpha-subunit with a pyruvoyl group at its N-terminus.

The protein localises to the cytoplasm. It catalyses the reaction L-aspartate + H(+) = beta-alanine + CO2. It participates in cofactor biosynthesis; (R)-pantothenate biosynthesis; beta-alanine from L-aspartate: step 1/1. Functionally, catalyzes the pyruvoyl-dependent decarboxylation of aspartate to produce beta-alanine. This Syntrophobacter fumaroxidans (strain DSM 10017 / MPOB) protein is Aspartate 1-decarboxylase.